The following is a 143-amino-acid chain: Transcriptional regulator MraZ (143 aa).

SpoVT-AbrB domains are found at residues 5–47 and 76–119; these read THSP…SQKE and ASDE…DADA.

It belongs to the MraZ family. As to quaternary structure, forms oligomers.

The protein localises to the cytoplasm. Its subcellular location is the nucleoid. This is Transcriptional regulator MraZ from Paenarthrobacter aurescens (strain TC1).